A 407-amino-acid chain; its full sequence is MTTAIPNSYRSGPDERGHFGIFGGRFVAETLMPLILDLEKAYADAKADPAFQGEMNSYRTHYVGRPSPLYYAERLTEHLGGAKIYFKRDELNHTGSHKVNNVLGQIMLARRMGKKRIIAETGAGQHGVATATLCARFGLDCVVYMGAVDVERQQPNVLRMEMLGAKVIPVQSGARTLKDAMNEALRDWVTNVHNTFYCIGTVAGPHPYPMMVRDFQSVIGQETRTQMQEAEGRLPDSLVACIGGGSNAMGLFHPFLDDPSVEIFGVEAAGHGLTQLHAASIAGGRPGVLHGNRTYLLMDDDGQIAEAHSISAGLDYPGIGPEHSWLHEAKRVTYLSATDDEALDAFLLLSRLEGIIPALEPAHAVAKVMQLAPNKPKDHLMVVNLCGRGDKDVPQVGEILRKRAKQS.

Position 98 is an N6-(pyridoxal phosphate)lysine (K98).

Belongs to the TrpB family. Tetramer of two alpha and two beta chains. Requires pyridoxal 5'-phosphate as cofactor.

The enzyme catalyses (1S,2R)-1-C-(indol-3-yl)glycerol 3-phosphate + L-serine = D-glyceraldehyde 3-phosphate + L-tryptophan + H2O. It functions in the pathway amino-acid biosynthesis; L-tryptophan biosynthesis; L-tryptophan from chorismate: step 5/5. In terms of biological role, the beta subunit is responsible for the synthesis of L-tryptophan from indole and L-serine. This chain is Tryptophan synthase beta chain, found in Bradyrhizobium sp. (strain ORS 278).